The following is an 896-amino-acid chain: MDVVGENEALQQFFEAQGANGTLGNPTLDTSLLEEFLGNDFDLGALQGQLPDTPPYSASDSCSPPQVKGACCPTLTPAARGTPAALLHSANAPGILPAHQSHSSSEMSNSGLPHRTFHNCYPDASHLMSPLDQSVSGGIGCSYHQQPLCHSPGVSLPPTKKRKCTQVLEDSGDCHVWTHHSRPMTGRSHSIEVQDLDSERQNMMLADQPSPALKWQPYRSVPWHSLLNSQYEKLPDVGYRVVTDKGFNFSPADEAFVCQKKNHFQITIHIQVWGSPKFVKTQMGLKPIEMFYLKPFGVKVEATNQIIAIEQSQADRSKKIFNPIKINLLADQVTKVTLGRLHFSETTANNMRKKGKPNPDQRYFMLVVGLYAANQDQFYLLSAHISERIIVRASNPGQFENDIDALWQRGQVPESVVCHGRVGINTDAPDEALVVCGNMKVMGTIMHPSDSRAKQNVQEVDTNEQLRRIAQMRIVEYDYKPEFASAMGINTAHQTGMIAQEVREILPRAVREVGDVTCENGETLENFLMVDKDQIFMENVGAVKQLCKLTNNLEERIEELEIWNRKLARLKRLSSSKSSASEASSISKFSRALSASSPKRTISKKNSKVSFSGKKQSCPNWVFQSLVITLIAVMAFCLKDQDRCTPSAPSSNLTSSQEPALPSTASPSAPNTTLATTLPSFQVPEITFCEILPCQQTYCCPIWGTRRGLSSPMQRQLEEQEPHQGPWAGRSTSFLAAEAQTNVDWRSDWIDTTISSIQIMEIQQIIDRRYCSRSLQCGSGNYYYHIPVNKYTPTNVKFSLEINTTEPLIVFQCKFTLGNMCFRSKIEAKGMESQQEVSQEMTQGYQHIWSLPVAPLFDSGYHFRVAAPDLADCSTDPYFAGKFFTDYFFYFYRHCV.

The segment at residues Gly-111–Ile-403 is a DNA-binding region (NDT80). A Peptidase S74 domain is found at Ser-449 to Ile-557. Residues Gly-541–Leu-573 are a coiled coil. The helical transmembrane segment at Val-622 to Leu-638 threads the bilayer. The segment covering Ala-648–Glu-658 has biased composition (polar residues). The disordered stretch occupies residues Ala-648–Thr-672. A compositionally biased stretch (low complexity) spans Pro-659–Thr-672.

It belongs to the MRF family.

It is found in the membrane. The sequence is that of Myelin regulatory factor-like protein (MYRFL) from Bos taurus (Bovine).